Consider the following 160-residue polypeptide: Ribosome maturation factor RimP (160 aa).

Belongs to the RimP family.

The protein localises to the cytoplasm. Its function is as follows. Required for maturation of 30S ribosomal subunits. This is Ribosome maturation factor RimP from Syntrophus aciditrophicus (strain SB).